The primary structure comprises 431 residues: Enolase (431 aa).

A (2R)-2-phosphoglycerate-binding site is contributed by Gln167. Glu209 functions as the Proton donor in the catalytic mechanism. Mg(2+)-binding residues include Asp246, Glu290, and Asp317. 4 residues coordinate (2R)-2-phosphoglycerate: Lys342, Arg371, Ser372, and Lys393. Lys342 (proton acceptor) is an active-site residue.

The protein belongs to the enolase family. Component of the RNA degradosome, a multiprotein complex involved in RNA processing and mRNA degradation. The cofactor is Mg(2+).

It is found in the cytoplasm. Its subcellular location is the secreted. It localises to the cell surface. It carries out the reaction (2R)-2-phosphoglycerate = phosphoenolpyruvate + H2O. Its pathway is carbohydrate degradation; glycolysis; pyruvate from D-glyceraldehyde 3-phosphate: step 4/5. Functionally, catalyzes the reversible conversion of 2-phosphoglycerate (2-PG) into phosphoenolpyruvate (PEP). It is essential for the degradation of carbohydrates via glycolysis. In Yersinia enterocolitica serotype O:8 / biotype 1B (strain NCTC 13174 / 8081), this protein is Enolase.